A 234-amino-acid polypeptide reads, in one-letter code: 3-dehydroquinate dehydratase (234 aa).

3-dehydroquinate contacts are provided by residues Glu33 to Arg35 and Arg68. The active-site Proton donor/acceptor is the His124. Residue Lys151 is the Schiff-base intermediate with substrate of the active site. Residues Arg193, Ser214, and Gln218 each coordinate 3-dehydroquinate.

This sequence belongs to the type-I 3-dehydroquinase family. Homodimer.

It carries out the reaction 3-dehydroquinate = 3-dehydroshikimate + H2O. The protein operates within metabolic intermediate biosynthesis; chorismate biosynthesis; chorismate from D-erythrose 4-phosphate and phosphoenolpyruvate: step 3/7. Functionally, involved in the third step of the chorismate pathway, which leads to the biosynthesis of aromatic amino acids. Catalyzes the cis-dehydration of 3-dehydroquinate (DHQ) and introduces the first double bond of the aromatic ring to yield 3-dehydroshikimate. In Syntrophobacter fumaroxidans (strain DSM 10017 / MPOB), this protein is 3-dehydroquinate dehydratase.